A 792-amino-acid chain; its full sequence is Zinc finger CCCH domain-containing protein 11A (792 aa).

C3H1-type zinc fingers lie at residues 2–29 (PNQG…HCEA), 31–57 (LGNE…HMEI), and 60–87 (KRSE…HTRS). Disordered stretches follow at residues 103–191 (PTVP…VHNG), 223–331 (KKMK…KAGE), and 345–443 (ASQK…RSMQ). Ser108 carries the phosphoserine modification. Residues Lys114 and Lys124 each participate in a glycyl lysine isopeptide (Lys-Gly) (interchain with G-Cter in SUMO2) cross-link. Residues 115-135 (TSQLTVQQSKLSVQSNPSPQL) show a composition bias toward polar residues. Phosphoserine is present on Ser132. A Glycyl lysine isopeptide (Lys-Gly) (interchain with G-Cter in SUMO2) cross-link involves residue Lys140. A phosphoserine mark is found at Ser149, Ser171, and Ser289. Residues 160-175 (ADDDEDDDDQFSEEGD) are compositionally biased toward acidic residues. Basic and acidic residues-rich tracts occupy residues 308–331 (KKVE…KAGE) and 345–360 (ASQK…KAEE). The stretch at 338–360 (EEILLERASQKRGELQTKLKAEE) forms a coiled coil. Residue Ser346 is modified to Phosphoserine. The span at 367–376 (SPSGTKSSSS) shows a compositional bias: low complexity. Composition is skewed to basic and acidic residues over residues 393–405 (QQEM…KKDT) and 431–443 (QPEE…RSMQ). Lys454 participates in a covalent cross-link: Glycyl lysine isopeptide (Lys-Gly) (interchain with G-Cter in SUMO2). 2 disordered regions span residues 458–531 (ALRV…PTKL) and 545–571 (QRLQ…ASSY). Residues 461 to 473 (VQQSSESSGNSRP) show a composition bias toward polar residues. Basic and acidic residues-rich tracts occupy residues 492 to 501 (GVKEEKKCGL) and 545 to 558 (QRLQ…KEKA). Lys601 is covalently cross-linked (Glycyl lysine isopeptide (Lys-Gly) (interchain with G-Cter in SUMO2)). Residues 690–750 (LSEDKPVTMS…SASTGKPPLS (61 aa)) are disordered. Residues 698–715 (MSETENPKDSSVLSSAQA) are compositionally biased toward polar residues. Residues 717-730 (SEPLLPEGSGPSSS) are compositionally biased toward low complexity.

As to quaternary structure, interacts with TREX complex components THOC2, DDX39 and POLDIP3; the interactions are ATP-dependent. Interacts with PABPN1; this interaction retains ZC3H11A in nuclear speckles. Interacts with KPNA3.

The protein localises to the nucleus speckle. In terms of biological role, through its association with TREX complex components, may participate in the export and post-transcriptional coordination of selected mRNA transcripts, including those required to maintain the metabolic processes in embryonic cells. Binds RNA. The sequence is that of Zinc finger CCCH domain-containing protein 11A (Zc3h11a) from Mus musculus (Mouse).